The primary structure comprises 172 residues: ATP synthase subunit b (172 aa).

Residues 17–37 (IVFSAIVLAIVLPFFWWFVIP) traverse the membrane as a helical segment.

Belongs to the ATPase B chain family. As to quaternary structure, F-type ATPases have 2 components, F(1) - the catalytic core - and F(0) - the membrane proton channel. F(1) has five subunits: alpha(3), beta(3), gamma(1), delta(1), epsilon(1). F(0) has three main subunits: a(1), b(2) and c(10-14). The alpha and beta chains form an alternating ring which encloses part of the gamma chain. F(1) is attached to F(0) by a central stalk formed by the gamma and epsilon chains, while a peripheral stalk is formed by the delta and b chains.

The protein resides in the cell membrane. Functionally, f(1)F(0) ATP synthase produces ATP from ADP in the presence of a proton or sodium gradient. F-type ATPases consist of two structural domains, F(1) containing the extramembraneous catalytic core and F(0) containing the membrane proton channel, linked together by a central stalk and a peripheral stalk. During catalysis, ATP synthesis in the catalytic domain of F(1) is coupled via a rotary mechanism of the central stalk subunits to proton translocation. Component of the F(0) channel, it forms part of the peripheral stalk, linking F(1) to F(0). This Tropheryma whipplei (strain TW08/27) (Whipple's bacillus) protein is ATP synthase subunit b.